We begin with the raw amino-acid sequence, 33 residues long: Neutrophil defensin 4 (33 aa).

Cystine bridges form between Cys3/Cys31, Cys5/Cys20, and Cys10/Cys30.

It belongs to the alpha-defensin family. Post-translationally, HANP-2 could be a product of proteolytic N-terminal amino acid removal from HANP-4.

Its subcellular location is the secreted. Functionally, bactericidal activity, greater against Gram-positive bacteria. Low anti-fungi activity. This Mesocricetus auratus (Golden hamster) protein is Neutrophil defensin 4.